The sequence spans 317 residues: Transaldolase (317 aa).

The Schiff-base intermediate with substrate role is filled by Lys-132.

It belongs to the transaldolase family. Type 1 subfamily.

The protein localises to the cytoplasm. The enzyme catalyses D-sedoheptulose 7-phosphate + D-glyceraldehyde 3-phosphate = D-erythrose 4-phosphate + beta-D-fructose 6-phosphate. Its pathway is carbohydrate degradation; pentose phosphate pathway; D-glyceraldehyde 3-phosphate and beta-D-fructose 6-phosphate from D-ribose 5-phosphate and D-xylulose 5-phosphate (non-oxidative stage): step 2/3. Functionally, transaldolase is important for the balance of metabolites in the pentose-phosphate pathway. The sequence is that of Transaldolase from Haemophilus influenzae (strain ATCC 51907 / DSM 11121 / KW20 / Rd).